A 147-amino-acid polypeptide reads, in one-letter code: Small ribosomal subunit protein bS6 (147 aa).

Residues 96–147 form a disordered region; the sequence is VTEPSPMMKAKEERFTKRDDREERSDRSEAPRAEAPAKAEAPAKAEDEAAAE. Over residues 104-147 the composition is skewed to basic and acidic residues; that stretch reads KAKEERFTKRDDREERSDRSEAPRAEAPAKAEAPAKAEDEAAAE.

Belongs to the bacterial ribosomal protein bS6 family.

Its function is as follows. Binds together with bS18 to 16S ribosomal RNA. The sequence is that of Small ribosomal subunit protein bS6 from Photobacterium profundum (strain SS9).